A 527-amino-acid polypeptide reads, in one-letter code: Bifunctional purine biosynthesis protein PurH (527 aa).

The 148-residue stretch at 9–156 (NAKRPIRRAL…KNHPSVAVVV (148 aa)) folds into the MGS-like domain.

The protein belongs to the PurH family.

The enzyme catalyses (6R)-10-formyltetrahydrofolate + 5-amino-1-(5-phospho-beta-D-ribosyl)imidazole-4-carboxamide = 5-formamido-1-(5-phospho-D-ribosyl)imidazole-4-carboxamide + (6S)-5,6,7,8-tetrahydrofolate. It carries out the reaction IMP + H2O = 5-formamido-1-(5-phospho-D-ribosyl)imidazole-4-carboxamide. It functions in the pathway purine metabolism; IMP biosynthesis via de novo pathway; 5-formamido-1-(5-phospho-D-ribosyl)imidazole-4-carboxamide from 5-amino-1-(5-phospho-D-ribosyl)imidazole-4-carboxamide (10-formyl THF route): step 1/1. The protein operates within purine metabolism; IMP biosynthesis via de novo pathway; IMP from 5-formamido-1-(5-phospho-D-ribosyl)imidazole-4-carboxamide: step 1/1. The protein is Bifunctional purine biosynthesis protein PurH of Mycolicibacterium paratuberculosis (strain ATCC BAA-968 / K-10) (Mycobacterium paratuberculosis).